The sequence spans 205 residues: Small ribosomal subunit protein uS4 (205 aa).

Residues 19 to 45 (IWGRPKSPVNRREYGPGQHGQRRKGKL) are disordered. In terms of domain architecture, S4 RNA-binding spans 94–157 (RRLDAVVYRA…KQLAFVLEAS (64 aa)).

Part of the 30S ribosomal subunit. Contacts protein S5. The interaction surface between S4 and S5 is involved in control of translational fidelity. Post-translationally, may be methylated on an undetermined residue.

Functionally, one of the primary rRNA binding proteins, it binds directly to 16S rRNA where it nucleates assembly of the body of the 30S subunit. With S5 and S12 plays an important role in translational accuracy. This chain is Small ribosomal subunit protein uS4, found in Rhodopseudomonas palustris (strain ATCC BAA-98 / CGA009).